The sequence spans 490 residues: Sec sixty-one protein homolog (490 aa).

The Cytoplasmic portion of the chain corresponds to 1-32 (MSGFRLIDIVKPILPILPEVELPFEKLPFDDK). The chain crosses the membrane as a helical span at residues 33-53 (IVYTIFAGLIYLFAQFPLVGL). The Lumenal segment spans residues 54–121 (PKATTPNVND…DRELFQSLTK (68 aa)). The helical transmembrane segment at 122–142 (VFAIVQYVILTNIFIFAGYFG) threads the bilayer. Residues 143-146 (DDLS) are Cytoplasmic-facing. Residues 147 to 167 (VVQIGLINFQLVGAGIFTTLL) form a helical membrane-spanning segment. At 168–174 (AEVIDKG) the chain is on the lumenal side. A helical transmembrane segment spans residues 175–195 (FGFSSGAMIINTVVIATNLVA). Residues 196–242 (DTFGVSQIKVGEDDQTEAQGALINLIQGLRSKHKTFIGGIISAFNRD) are Cytoplasmic-facing. A helical transmembrane segment spans residues 243–263 (YLPNLTTTIIVLAIAIIVCYL). Over 264 to 293 (QSVRVELPIRSTRARGTNNVYPIKLLYTGC) the chain is Lumenal. A helical membrane pass occupies residues 294 to 314 (LSVLFSYTILFYIHIFAFVLI). The Cytoplasmic portion of the chain corresponds to 315-339 (QLVAKNEPTHIICKIMGHYENANNL). The helical transmembrane segment at 340-360 (LAVPTFPLSLLAPPTSFFKGV) threads the bilayer. Position 361 (T361) is a topological domain, lumenal. A helical transmembrane segment spans residues 362-382 (QQPLTFITYSAFILVTGIWFA). Residues 383–421 (DKWQAISGSSARDVALEFKDQGITLMGRREQNVAKELNK) are Cytoplasmic-facing. A helical transmembrane segment spans residues 422–442 (VIPIAAVTGASVLSLITVIGE). Over 443-449 (SLGLKGK) the chain is Lumenal. Residues 450–470 (AAGIVVGIAGGFSLLEVITIE) traverse the membrane as a helical segment. Topologically, residues 471–490 (YQQSGGQSALNQVLGVPGAM) are cytoplasmic.

The protein belongs to the SecY/SEC61-alpha family. In terms of assembly, component of the heterotrimeric Ssh1 complex, which is composed of SSH1, SBH2 and SSS1.

Its subcellular location is the endoplasmic reticulum membrane. Its function is as follows. Part of the Ssh1 complex, which probably is the major component of a channel-forming translocon complex that may function exclusively in the cotranslational pathway of protein endoplasmic reticulum (ER) import. This is Sec sixty-one protein homolog (SSH1) from Saccharomyces cerevisiae (strain ATCC 204508 / S288c) (Baker's yeast).